An 836-amino-acid chain; its full sequence is Subtilisin-like protease PIMMS2 (836 aa).

Catalysis depends on charge relay system residues D155, H222, and S414. The disordered stretch occupies residues 802 to 836; that stretch reads EKKNKYNNSVLKRNEMKSHNNSQKTPKIIPRKYSR.

The protein belongs to the peptidase S8 family.

The protein localises to the cell membrane. It catalyses the reaction Hydrolysis of proteins with broad specificity for peptide bonds, and a preference for a large uncharged residue in P1. Hydrolyzes peptide amides.. Its function is as follows. Probable serine protease which plays a role in ookinete traversal of the mosquito host midgut epithelium. The chain is Subtilisin-like protease PIMMS2 from Plasmodium berghei (strain Anka).